Here is a 167-residue protein sequence, read N- to C-terminus: Large ribosomal subunit protein bL9 (167 aa).

The protein belongs to the bacterial ribosomal protein bL9 family.

Its function is as follows. Binds to the 23S rRNA. This Nitratidesulfovibrio vulgaris (strain DSM 19637 / Miyazaki F) (Desulfovibrio vulgaris) protein is Large ribosomal subunit protein bL9.